Here is a 201-residue protein sequence, read N- to C-terminus: Imidazoleglycerol-phosphate dehydratase (201 aa).

This sequence belongs to the imidazoleglycerol-phosphate dehydratase family.

The protein localises to the cytoplasm. It catalyses the reaction D-erythro-1-(imidazol-4-yl)glycerol 3-phosphate = 3-(imidazol-4-yl)-2-oxopropyl phosphate + H2O. The protein operates within amino-acid biosynthesis; L-histidine biosynthesis; L-histidine from 5-phospho-alpha-D-ribose 1-diphosphate: step 6/9. The polypeptide is Imidazoleglycerol-phosphate dehydratase (Prochlorococcus marinus (strain MIT 9515)).